The chain runs to 100 residues: Urease subunit gamma (100 aa).

The protein belongs to the urease gamma subunit family. As to quaternary structure, heterotrimer of UreA (gamma), UreB (beta) and UreC (alpha) subunits. Three heterotrimers associate to form the active enzyme.

The protein resides in the cytoplasm. The catalysed reaction is urea + 2 H2O + H(+) = hydrogencarbonate + 2 NH4(+). It participates in nitrogen metabolism; urea degradation; CO(2) and NH(3) from urea (urease route): step 1/1. The polypeptide is Urease subunit gamma (Hahella chejuensis (strain KCTC 2396)).